The primary structure comprises 398 residues: Putative F-box protein At1g67450 (398 aa).

An F-box domain is found at 2-56; that stretch reads TMMMSDLPNDLVEEILSRVPITSLGAVRSTCKRWNGLSKDRIVCKGDANQQFTGF.

This Arabidopsis thaliana (Mouse-ear cress) protein is Putative F-box protein At1g67450.